Here is a 187-residue protein sequence, read N- to C-terminus: dCTP deaminase, dUMP-forming (187 aa).

DCTP contacts are provided by residues 99 to 104, Asp-117, 125 to 127, Gln-146, Tyr-159, Lys-166, and Gln-170; these read KSSIAR and TLE. Glu-127 acts as the Proton donor/acceptor in catalysis.

The protein belongs to the dCTP deaminase family. Homotrimer.

It carries out the reaction dCTP + 2 H2O = dUMP + NH4(+) + diphosphate. Its pathway is pyrimidine metabolism; dUMP biosynthesis; dUMP from dCTP: step 1/1. Functionally, bifunctional enzyme that catalyzes both the deamination of dCTP to dUTP and the hydrolysis of dUTP to dUMP without releasing the toxic dUTP intermediate. The protein is dCTP deaminase, dUMP-forming of Methanoculleus marisnigri (strain ATCC 35101 / DSM 1498 / JR1).